Reading from the N-terminus, the 61-residue chain is Bowman-Birk type proteinase inhibitor (61 aa).

7 disulfides stabilise this stretch: Cys-4-Cys-57, Cys-5-Cys-20, Cys-8-Cys-53, Cys-10-Cys-18, Cys-27-Cys-34, Cys-31-Cys-46, and Cys-36-Cys-44.

This sequence belongs to the Bowman-Birk serine protease inhibitor family.

Its function is as follows. Strong inhibitor of trypsin with a 1:1 stoichiometry. Weaker inhibitor of chymotrypsin. This is Bowman-Birk type proteinase inhibitor from Erythrina variegata (Indian coral tree).